The chain runs to 459 residues: Argininosuccinate lyase (459 aa).

It belongs to the lyase 1 family. Argininosuccinate lyase subfamily.

It is found in the cytoplasm. It catalyses the reaction 2-(N(omega)-L-arginino)succinate = fumarate + L-arginine. It participates in amino-acid biosynthesis; L-arginine biosynthesis; L-arginine from L-ornithine and carbamoyl phosphate: step 3/3. The polypeptide is Argininosuccinate lyase (Staphylococcus aureus (strain USA300)).